The sequence spans 216 residues: Orotate phosphoribosyltransferase (216 aa).

5-phospho-alpha-D-ribose 1-diphosphate contacts are provided by residues arginine 101, lysine 105, histidine 107, and 127–135; that span reads EDLISTGGS. Serine 131 contacts orotate.

This sequence belongs to the purine/pyrimidine phosphoribosyltransferase family. PyrE subfamily. Homodimer. Mg(2+) is required as a cofactor.

The catalysed reaction is orotidine 5'-phosphate + diphosphate = orotate + 5-phospho-alpha-D-ribose 1-diphosphate. It participates in pyrimidine metabolism; UMP biosynthesis via de novo pathway; UMP from orotate: step 1/2. In terms of biological role, catalyzes the transfer of a ribosyl phosphate group from 5-phosphoribose 1-diphosphate to orotate, leading to the formation of orotidine monophosphate (OMP). This is Orotate phosphoribosyltransferase from Cutibacterium acnes (strain DSM 16379 / KPA171202) (Propionibacterium acnes).